The primary structure comprises 804 residues: Elongation factor G, mitochondrial (804 aa).

The transit peptide at Met1–Arg63 directs the protein to the mitochondrion. The tr-type G domain occupies Arg99 to Ala385. GTP-binding positions include Ala108–Thr115, Asp183–His187, and Asn237–Asp240.

Belongs to the TRAFAC class translation factor GTPase superfamily. Classic translation factor GTPase family. EF-G/EF-2 subfamily.

The protein localises to the mitochondrion. It functions in the pathway protein biosynthesis; polypeptide chain elongation. Mitochondrial GTPase that catalyzes the GTP-dependent ribosomal translocation step during translation elongation. During this step, the ribosome changes from the pre-translocational (PRE) to the post-translocational (POST) state as the newly formed A-site-bound peptidyl-tRNA and P-site-bound deacylated tRNA move to the P and E sites, respectively. Catalyzes the coordinated movement of the two tRNA molecules, the mRNA and conformational changes in the ribosome. In Botryotinia fuckeliana (strain B05.10) (Noble rot fungus), this protein is Elongation factor G, mitochondrial (mef1).